The sequence spans 53 residues: Lectin alpha chain (53 aa).

The protein belongs to the leguminous lectin family. In terms of assembly, tetramer of two alpha and two beta chains.

In Lathyrus clymenum (Spanish vetchling), this protein is Lectin alpha chain.